The chain runs to 177 residues: Protein SOB FIVE-LIKE 6 (177 aa).

An SOFL-A motif is present at residues 14–19; the sequence is SGWTMY. 2 disordered regions span residues 37-60 and 78-104; these read ETKQ…PYYC and KSKS…FNSS. The SOFL-B motif lies at 47–56; sequence SMVSDASSGP. A compositionally biased stretch (basic residues) spans 79–90; that stretch reads SKSKNKNKNKKK.

Belongs to the SOFL plant protein family. As to expression, expressed in seedlings, flowers and siliques. Barely detectable in roots and leaves.

It localises to the cytoplasm. Its subcellular location is the nucleus. Its function is as follows. Involved in cytokinin-mediated development. The chain is Protein SOB FIVE-LIKE 6 from Arabidopsis thaliana (Mouse-ear cress).